We begin with the raw amino-acid sequence, 118 residues long: DNA-directed RNA polymerase subunit omega (118 aa).

A disordered region spans residues 78 to 104; sequence DEPEEDSMAMLMGGGQPDKPAEDDMSE.

This sequence belongs to the RNA polymerase subunit omega family. In terms of assembly, the RNAP catalytic core consists of 2 alpha, 1 beta, 1 beta' and 1 omega subunit. When a sigma factor is associated with the core the holoenzyme is formed, which can initiate transcription.

The enzyme catalyses RNA(n) + a ribonucleoside 5'-triphosphate = RNA(n+1) + diphosphate. Promotes RNA polymerase assembly. Latches the N- and C-terminal regions of the beta' subunit thereby facilitating its interaction with the beta and alpha subunits. This chain is DNA-directed RNA polymerase subunit omega, found in Dinoroseobacter shibae (strain DSM 16493 / NCIMB 14021 / DFL 12).